The primary structure comprises 513 residues: ATP synthase subunit alpha (513 aa).

169 to 176 (GDRQTGKT) serves as a coordination point for ATP.

The protein belongs to the ATPase alpha/beta chains family. In terms of assembly, F-type ATPases have 2 components, CF(1) - the catalytic core - and CF(0) - the membrane proton channel. CF(1) has five subunits: alpha(3), beta(3), gamma(1), delta(1), epsilon(1). CF(0) has three main subunits: a(1), b(2) and c(9-12). The alpha and beta chains form an alternating ring which encloses part of the gamma chain. CF(1) is attached to CF(0) by a central stalk formed by the gamma and epsilon chains, while a peripheral stalk is formed by the delta and b chains.

It localises to the cell inner membrane. It catalyses the reaction ATP + H2O + 4 H(+)(in) = ADP + phosphate + 5 H(+)(out). Produces ATP from ADP in the presence of a proton gradient across the membrane. The alpha chain is a regulatory subunit. This is ATP synthase subunit alpha from Dichelobacter nodosus (strain VCS1703A).